A 60-amino-acid polypeptide reads, in one-letter code: Lantibiotic Pep5 (60 aa).

The propeptide occupies 1 to 26 (MKNNKNLFDLEIKKETSQNTDELEPQ). The tract at residues 1 to 29 (MKNNKNLFDLEIKKETSQNTDELEPQTAG) is disordered. A 2-oxobutanoic acid modification is found at T27. A cross-link (lanthionine (Ser-Cys)) is located at residues 35 to 39 (SVKQC). 2 positions are modified to 2,3-didehydrobutyrine: T42 and T46. A cross-link (beta-methyllanthionine (Thr-Cys)) is located at residues 50-53 (TVSC). Positions 52-59 (SCKGKNGC) form a cross-link, lanthionine (Ser-Cys).

Belongs to the type A lantibiotic family. Maturation of lantibiotics involves the enzymatic conversion of Thr, and Ser into dehydrated AA and the formation of thioether bonds with cysteine. This is followed by membrane translocation and cleavage of the modified precursor. In terms of processing, after proteolysis of the propeptide, the N-terminal 2,3-didehydrobutyrine hydrolyzes to 2-oxobutanoic acid, possibly spontaneously.

Lanthionine-containing peptide antibiotic (lantibiotic) active on Gram-positive bacteria. The bactericidal activity of lantibiotics is based on depolarization of energized bacterial cytoplasmic membranes, initiated by the formation of aqueous transmembrane pores. The sequence is that of Lantibiotic Pep5 (pepA) from Staphylococcus epidermidis.